The following is a 285-amino-acid chain: tRNA uridine(34) hydroxylase (285 aa).

The 96-residue stretch at 130 to 225 (RGDDVVFFDG…YGEAFGDTGL (96 aa)) folds into the Rhodanese domain. Cysteine 185 (cysteine persulfide intermediate) is an active-site residue.

Belongs to the TrhO family.

The catalysed reaction is uridine(34) in tRNA + AH2 + O2 = 5-hydroxyuridine(34) in tRNA + A + H2O. Catalyzes oxygen-dependent 5-hydroxyuridine (ho5U) modification at position 34 in tRNAs. The chain is tRNA uridine(34) hydroxylase from Rhodococcus jostii (strain RHA1).